Consider the following 429-residue polypeptide: D-galactonate dehydratase family member Caci_4410 (429 aa).

Residues 1–22 (MTDANHLLDPSGALPQTRPPWT) are disordered. Asp233 is a Mg(2+) binding site. Position 235 (His235) interacts with D-arabinonate. 2 residues coordinate Mg(2+): Glu259 and Glu285. D-arabinonate is bound by residues Glu285, Arg306, His335, and Glu362.

The protein belongs to the mandelate racemase/muconate lactonizing enzyme family. GalD subfamily.

In terms of biological role, has no detectable activity with D-mannonate and with a panel of 70 other acid sugars (in vitro), in spite of the conservation of the residues that are expected to be important for catalytic activity and cofactor binding. May have evolved a divergent function. The protein is D-galactonate dehydratase family member Caci_4410 of Catenulispora acidiphila (strain DSM 44928 / JCM 14897 / NBRC 102108 / NRRL B-24433 / ID139908).